Reading from the N-terminus, the 393-residue chain is DNA polymerase processivity factor (393 aa).

Disordered stretches follow at residues 25-50 (EMERGSRDHHRDHRDHREHRETREPP), 311-339 (ESRFERMGKQDDGKGDRSHKNDDGSALAS), and 355-393 (KNGTAGSSLFNEKEDSESDDSMHFDYSSNPNPKRQRCVV). Basic residues predominate over residues 31-41 (RDHHRDHRDHR). A compositionally biased stretch (basic and acidic residues) spans 311-333 (ESRFERMGKQDDGKGDRSHKNDD).

This sequence belongs to the herpesviridae polymerase accessory protein family.

Functionally, accessory subunit of the DNA polymerase that acts to increase the processivity of polymerization. In Human herpesvirus 6A (strain Uganda-1102) (HHV-6 variant A), this protein is DNA polymerase processivity factor (U27).